The sequence spans 413 residues: Ferredoxin--NADP reductase (413 aa).

M1 is subject to N-acetylmethionine. Residues N18–L76 form the CpcD-like domain. Residues K74 to K120 form a disordered region. A compositionally biased stretch (polar residues) spans P107–T116. The region spanning K133–L256 is the FAD-binding FR-type domain. FAD is bound by residues R192–S195, C213–R215, Y219, V230–S232, and T271. Residues S195 and R215 each contribute to the NADP(+) site. NADP(+) is bound by residues T271, I303–P304, S333–R334, R343–Q347, G372–L373, and E411.

This sequence belongs to the ferredoxin--NADP reductase type 1 family. Purifies with both the classic phycobilisome (PBS) supercomplex (CpcG-PBS) and a photosystem I-associated PBS called CpcL-PBS; it accumulates to a higher level in CpcL-PBS. In both PBS it can be cross-linked to both phycocyanin subunits. The cofactor is FAD. Acetylated at the N-terminus; 6% of protein in CpcG-PBS and 12% of protein in CpcL-PBS is acetylated.

The protein resides in the cellular thylakoid membrane. The enzyme catalyses 2 reduced [2Fe-2S]-[ferredoxin] + NADP(+) + H(+) = 2 oxidized [2Fe-2S]-[ferredoxin] + NADPH. This chain is Ferredoxin--NADP reductase, found in Synechocystis sp. (strain ATCC 27184 / PCC 6803 / Kazusa).